The following is a 569-amino-acid chain: ATP-dependent RNA helicase dhh1 (569 aa).

A compositionally biased stretch (polar residues) spans 1 to 16 (MSDQLADQLKATSLSS). The disordered stretch occupies residues 1 to 39 (MSDQLADQLKATSLSSGPEDWKKGLNLPARDTRQQTEDV). The Q motif motif lies at 45–73 (LDWEDFIHDRDLLMGIFEAGFEKPSPIQE). The Helicase ATP-binding domain occupies 76–246 (IPVALTGRDI…DKNMTSPYEI (171 aa)). 89 to 96 (AKNGTGKT) is a binding site for ATP. Residues 194-197 (DEAD) carry the DEAD box motif. The region spanning 256 to 416 (GITQYYAFVE…PIPQTIDKSL (161 aa)) is the Helicase C-terminal domain. Residues 436–569 (AQQPQQQLQQ…GQPQGPLSAQ (134 aa)) form a disordered region. Residues 437–482 (QQPQQQLQQSQRPQQSQQQQHFSTQTQPSNQLPPQQGNQQLGFNPQ) show a composition bias toward low complexity. The segment covering 495–520 (GDWQGQNGRQNGTGASNNQPRPTNYQ) has biased composition (polar residues). The span at 529-542 (SRGGRGRGFQGQGG) shows a compositional bias: gly residues. The span at 543 to 569 (RQNQNYGGQRGPRTQGQGQPQGPLSAQ) shows a compositional bias: low complexity.

This sequence belongs to the DEAD box helicase family. DDX6/DHH1 subfamily.

Its subcellular location is the cytoplasm. It localises to the P-body. It catalyses the reaction ATP + H2O = ADP + phosphate + H(+). Its function is as follows. ATP-dependent RNA helicase involved in mRNA turnover, and more specifically in mRNA decapping. Is involved in G1/S DNA-damage checkpoint recovery, probably through the regulation of the translational status of a subset of mRNAs. May also have a role in translation and mRNA nuclear export. In Neurospora crassa (strain ATCC 24698 / 74-OR23-1A / CBS 708.71 / DSM 1257 / FGSC 987), this protein is ATP-dependent RNA helicase dhh1 (drh-10).